Here is a 555-residue protein sequence, read N- to C-terminus: Solute carrier family 22 member 2 (555 aa).

Over 1–21 (MPTTVDDVLEHGGEFHFFQKQ) the chain is Cytoplasmic. Residues 22 to 42 (MFFLLALLSATFTPIYVGIVF) form a helical membrane-spanning segment. Residues 43 to 150 (LGFTPDHRCR…LVCANSWMLD (108 aa)) are Extracellular-facing. An N-linked (GlcNAc...) asparagine glycan is attached at Asn72. The helical transmembrane segment at 151 to 171 (LFQASVNVGFFFGSVSIGYIA) threads the bilayer. Topologically, residues 172 to 177 (DRFGRK) are cytoplasmic. The chain crosses the membrane as a helical span at residues 178–198 (LCLLTTVLINAAAGVLMAISP). The Extracellular portion of the chain corresponds to 199-210 (TYTWMLIFRLIQ). Residues 211 to 231 (GLVSKAGWLIGYILITEFVGR) form a helical membrane-spanning segment. Residues 232-238 (RYRRTVG) are Cytoplasmic-facing. The helical transmembrane segment at 239–259 (IFYQVAYTVGLLVLAGVAYAL) threads the bilayer. The Extracellular portion of the chain corresponds to 260-263 (PHWR). A helical transmembrane segment spans residues 264–284 (WLQFTVTLPNFFFLLYYWCIP). The Proline-rich sequence signature appears at 284–288 (PESPR). Residues 285-348 (ESPRWLISQN…VRTPQIRKHT (64 aa)) lie on the Cytoplasmic side of the membrane. Residues 349 to 369 (MILMYNWFTSSVLYQGLIMHM) form a helical membrane-spanning segment. The Extracellular portion of the chain corresponds to 370 to 375 (GLAGDN). A helical membrane pass occupies residues 376–396 (IYLDFFYSALVEFPAAFMIIV). At 397–404 (TIDRIGRR) the chain is on the cytoplasmic side. The helical transmembrane segment at 405–425 (YPWAASNMVAGAACLASVFIP) threads the bilayer. Residues 426–432 (GDLQWLK) are Extracellular-facing. A helical transmembrane segment spans residues 433–453 (IIISCLGRMGITMAYEIVRLV). The Cytoplasmic segment spans residues 454–464 (NAELYPTFIRN). A helical membrane pass occupies residues 465–485 (LGVHICSSMCDIGGIITPFLV). Topologically, residues 486–494 (YRLTNIWLE) are extracellular. The helical transmembrane segment at 495-515 (LPLMVFGVLGLVAGGLVLLLP) threads the bilayer. At 516 to 555 (ETKGKALPETIEEAENMQRPRKNKEKMIYLQVQKLDIPLN) the chain is on the cytoplasmic side.

It belongs to the major facilitator (TC 2.A.1) superfamily. Organic cation transporter (TC 2.A.1.19) family. Tyrosine phosphorylated.

The protein resides in the basolateral cell membrane. It localises to the basal cell membrane. Its subcellular location is the apical cell membrane. It carries out the reaction (R)-noradrenaline(out) = (R)-noradrenaline(in). The catalysed reaction is (R)-adrenaline(out) = (R)-adrenaline(in). The enzyme catalyses serotonin(out) = serotonin(in). It catalyses the reaction dopamine(out) = dopamine(in). It carries out the reaction histamine(out) = histamine(in). The catalysed reaction is thiamine(in) = thiamine(out). The enzyme catalyses creatinine(in) = creatinine(out). It catalyses the reaction 1-methylnicotinamide(out) = 1-methylnicotinamide(in). It carries out the reaction guanidine(out) = guanidine(in). The catalysed reaction is choline(out) = choline(in). The enzyme catalyses agmatine(out) = agmatine(in). It catalyses the reaction putrescine(out) = putrescine(in). It carries out the reaction spermidine(in) = spermidine(out). The catalysed reaction is tyramine(in) = tyramine(out). The enzyme catalyses L-histidyl-L-proline diketopiperazine(in) = L-histidyl-L-proline diketopiperazine(out). It catalyses the reaction (R)-salsolinol(in) = (R)-salsolinol(out). It carries out the reaction N-methyl-(R)-salsolinol(in) = N-methyl-(R)-salsolinol(out). The catalysed reaction is acetylcholine(in) = acetylcholine(out). The enzyme catalyses prostaglandin F2alpha(out) = prostaglandin F2alpha(in). It catalyses the reaction prostaglandin E2(out) = prostaglandin E2(in). Its activity is regulated as follows. Tyrosine phosphorylation of the transporter leads to activation of the transport activity. Inhibited by cGMP, most likely through a cGMP-binding protein that interacts with OCT2. Its function is as follows. Electrogenic voltage-dependent transporter that mediates the transport of a variety of organic cations such as endogenous bioactive amines, cationic drugs and xenobiotics. Functions as a Na(+)-independent, bidirectional uniporter. Cation cellular uptake or release is driven by the electrochemical potential, i.e. membrane potential and concentration gradient. However, may also engage electroneutral cation exchange when saturating concentrations of cation substrates are reached. Predominantly expressed at the basolateral membrane of hepatocytes and proximal tubules and involved in the uptake and disposition of cationic compounds by hepatic and renal clearance from the blood flow. Implicated in monoamine neurotransmitters uptake such as histamine, dopamine, adrenaline/epinephrine, noradrenaline/norepinephrine, serotonin and tyramine, thereby supporting a physiological role in the central nervous system by regulating interstitial concentrations of neurotransmitters. Also capable of transporting dopaminergic neuromodulators cyclo(his-pro), salsolinol and N-methyl-salsolinol, thereby involved in the maintenance of dopaminergic cell integrity in the central nervous system. Mediates the bidirectional transport of acetylcholine (ACh) at the apical membrane of ciliated cell in airway epithelium, thereby playing a role in luminal release of ACh from bronchial epithelium. Also transports guanidine and endogenous monoamines such as vitamin B1/thiamine, creatinine and N-1-methylnicotinamide (NMN). Mediates the uptake and efflux of quaternary ammonium compound choline. Mediates the bidirectional transport of polyamine agmatine and the uptake of polyamines putrescine and spermidine. Able to transport non-amine endogenous compounds such as prostaglandin E2 (PGE2) and prostaglandin F2-alpha (PGF2-alpha). Also involved in the uptake of xenobiotic 4-(4-(dimethylamino)styryl)-N-methylpyridinium (ASP). May contribute to regulate the transport of organic compounds in testis across the blood-testis-barrier. This chain is Solute carrier family 22 member 2 (SLC22A2), found in Pongo abelii (Sumatran orangutan).